The sequence spans 328 residues: MRIIFWGTPEYSVKSLEVLKKSDHEILAVITQPDKKRSRGNKLIASPVKQYAMKEGLPVFTPETLKKNDHFISLLKEFSCDLFVVIAYGKILPKKILDIPKYKSWNAHASLLPRWRGAAPIQWSILEGDDFTGVGIMRMEEGLDTGDVLVEKQIKIEKEDNLQTLTKKLSDLSSELLLKAISKIEQNKNKDINHLLKKQKDLQRKLKYARMINKSDYIIDWANNSTDIYRKINALYPRVSTTFKKKNLKIIKIKILTTDEIQNKNYKIVSDKFKPGYVIGLIENKGIIISTKTDPILLLEAKLEGKNISKQKQLLQQLNPLIGEKFSD.

A (6S)-5,6,7,8-tetrahydrofolate-binding site is contributed by 110 to 113; sequence SLLP.

This sequence belongs to the Fmt family.

The enzyme catalyses L-methionyl-tRNA(fMet) + (6R)-10-formyltetrahydrofolate = N-formyl-L-methionyl-tRNA(fMet) + (6S)-5,6,7,8-tetrahydrofolate + H(+). Its function is as follows. Attaches a formyl group to the free amino group of methionyl-tRNA(fMet). The formyl group appears to play a dual role in the initiator identity of N-formylmethionyl-tRNA by promoting its recognition by IF2 and preventing the misappropriation of this tRNA by the elongation apparatus. The polypeptide is Methionyl-tRNA formyltransferase (Prochlorococcus marinus (strain MIT 9515)).